The sequence spans 868 residues: Probable inorganic carbon transporter subunit DabA (868 aa).

Residues Cys-392, Asp-394, His-574, and Cys-589 each contribute to the Zn(2+) site.

The protein belongs to the inorganic carbon transporter (TC 9.A.2) DabA family. As to quaternary structure, forms a complex with DabB. Zn(2+) is required as a cofactor.

It is found in the cell membrane. Its function is as follows. Part of an energy-coupled inorganic carbon pump. This is Probable inorganic carbon transporter subunit DabA from Bacillus cereus (strain G9842).